Consider the following 220-residue polypeptide: Guanylate kinase (220 aa).

The 180-residue stretch at 11–190 (GVLFVLSSPS…CYGEVMAILR (180 aa)) folds into the Guanylate kinase-like domain. 18–25 (SPSGAGKT) is a binding site for ATP.

Belongs to the guanylate kinase family.

The protein localises to the cytoplasm. The catalysed reaction is GMP + ATP = GDP + ADP. Essential for recycling GMP and indirectly, cGMP. This is Guanylate kinase from Sphingopyxis alaskensis (strain DSM 13593 / LMG 18877 / RB2256) (Sphingomonas alaskensis).